Reading from the N-terminus, the 253-residue chain is uncharacterized protein (253 aa).

This is an uncharacterized protein from Mycobacterium bovis (strain ATCC BAA-935 / AF2122/97).